Consider the following 523-residue polypeptide: GMP synthase [glutamine-hydrolyzing] (523 aa).

The region spanning 8 to 205 (KILILDFGSQ…VVNICGCETK (198 aa)) is the Glutamine amidotransferase type-1 domain. Cysteine 85 (nucleophile) is an active-site residue. Catalysis depends on residues histidine 179 and glutamate 181. The region spanning 206–398 (WTAENIIEDA…LGLPAEMINR (193 aa)) is the GMPS ATP-PPase domain. 233–239 (SGGVDSS) contacts ATP.

As to quaternary structure, homodimer.

The catalysed reaction is XMP + L-glutamine + ATP + H2O = GMP + L-glutamate + AMP + diphosphate + 2 H(+). It functions in the pathway purine metabolism; GMP biosynthesis; GMP from XMP (L-Gln route): step 1/1. In terms of biological role, catalyzes the synthesis of GMP from XMP. The chain is GMP synthase [glutamine-hydrolyzing] from Haemophilus influenzae (strain PittEE).